The primary structure comprises 189 residues: Interferon alpha-A (189 aa).

The signal sequence occupies residues 1 to 23 (MAPAWSFLLSLLLLSCNAICSLG). Intrachain disulfides connect Cys-24-Cys-122 and Cys-52-Cys-162.

This sequence belongs to the alpha/beta interferon family.

It localises to the secreted. Its function is as follows. Produced by macrophages, IFN-alpha have antiviral activities. Interferon stimulates the production of two enzymes: a protein kinase and an oligoadenylate synthetase. This chain is Interferon alpha-A (IFNAA), found in Bos taurus (Bovine).